A 305-amino-acid polypeptide reads, in one-letter code: RNA-binding protein rnp-1 (305 aa).

Residues 3 to 72 (SKLFVGNLPD…KVVNIKKSTS (70 aa)) form the RRM domain. The segment at 84–97 (CFRCQSDEHRTPQC) adopts a CCHC-type zinc-finger fold. The disordered stretch occupies residues 284-305 (QQIQHQQATGSPAPVPAPPRLY). Residues 296 to 305 (APVPAPPRLY) are compositionally biased toward pro residues.

In terms of tissue distribution, expressed throughout the germline.

RNA-binding protein that is required for the germ line to transition from spermatogenesis to oogenesis and allow for normal oocyte development. The chain is RNA-binding protein rnp-1 from Caenorhabditis elegans.